The sequence spans 622 residues: MSTYAAYTTSTYQGRGLASGTYASGFGQLVSGMSSAGAICTTQIRDAREREKREIGLLNDRLADYIEKVRFLEAQNRCLSHDIDILRNGFSGGGHVSGLFDAEINQAKHILEQTTAHRSTFERDITGLSAEIEVFRKKWLDAVNAVKAHREDHDVDLDRLAKIEAEISLFKRKIRIVEEDVIRIRRENDGIYNEIARIKQLTHNEIALKNERSLNVSDLLQRINLLQTENNVRIEQELVFIRRDTTADNRDYFRHELQAAIRDIRADYEAISIRNRQDIEVWYREQIRKIQDESVRVNPDLYKEELISIRTTVTNVRSRLAEVEGRNFFLERLIDDLKNNEEAKFFEISLAERDAQIATLRDQCTELSIQMEKLCDNEISLRAEIERYRILLNGANVTTYTSNTHGSGSGIAVGGVVGGSTRVISQTTRTHSSSNTSYSNVPASRGGYSISGNVGGISVGGTIGSHGASAHATGGIIGSGVQAHRGSVSSLITDKPRDRVHDEKGVDQSGRHFHSWYLGTISINQVTPSYIELKNICKIRRVDVGGFRIEQSVNGQVLGSAQINVPLILDPQEVVRFNHRHGKYLGQFFMDVDAFDNSTVARTSMYNYTEPHEERAWFVYLD.

Positions 19-54 (SGTYASGFGQLVSGMSSAGAICTTQIRDAREREKRE) are head. An IF rod domain is found at 51 to 399 (EKREIGLLND…ILLNGANVTT (349 aa)). The tract at residues 55 to 86 (IGLLNDRLADYIEKVRFLEAQNRCLSHDIDIL) is coil 1A. The interval 87–99 (RNGFSGGGHVSGL) is linker 1. The segment at 100 to 237 (FDAEINQAKH…TENNVRIEQE (138 aa)) is coil 1B. The segment at 238 to 255 (LVFIRRDTTADNRDYFRH) is linker 12. The coil 2 stretch occupies residues 256–399 (ELQAAIRDIR…ILLNGANVTT (144 aa)). The segment at 400-550 (YTSNTHGSGS…RVDVGGFRIE (151 aa)) is tail. The LTD domain occupies 509–622 (SGRHFHSWYL…EERAWFVYLD (114 aa)).

It belongs to the intermediate filament family. Expressed in intestinal cells and at desmosomes in intestine and pharynx of the larva.

The protein resides in the cytoplasm. Cytoplasmic intermediate filaments provide mechanical strength to cells. Not essential protein, although its absence leads to mild defects in locomotion. This chain is Intermediate filament protein ifc-2 (ifc-2), found in Caenorhabditis elegans.